The following is an 857-amino-acid chain: Envelope glycoprotein gp160 (857 aa).

A signal peptide spans 1 to 26 (MAHTSNHLFILLLLISVYGFLGHKKN). Residues 27–682 (YVTVFYGIPA…FTSWMAYIRL (656 aa)) lie on the Extracellular side of the membrane. A glycan (N-linked (GlcNAc...) asparagine; by host) is linked at N39. The cysteines at positions 46 and 59 are disulfide-linked. Residues N72, N81, N116, N121, N142, N150, N167, N193, N205, N237, N240, N271, N277, N288, N299, N309, N364, N397, N407, N447, N464, and N469 are each glycosylated (N-linked (GlcNAc...) asparagine; by host). Disulfide bonds link C103–C213, C110–C204, C115–C164, C226–C256, and C236–C248. A V1 region spans residues 115-163 (CNNTGTNTTTKPITTPITTTKPSENLLNDTSPCIKNDTCPGIGLENTVD). Residues 164–204 (CYFNMTGLRRDEKKQYKDTWYEKDLECNGNSTSTICYMRTC) form a V2 region. Residues 304–336 (CRRPGNKTVIPITIMSGLNFHSQPLNTRPRQAW) form a V3 region. Residues C304 and C337 are joined by a disulfide bond. 2 cysteine pairs are disulfide-bonded: C389–C446 and C396–C419. Residues 396–419 (CNMTWFLNWVENRTGTTQKNYVTC) form a V4 region. Residues 464–472 (NDTKTNITM) form a V5 region. A fusion peptide region spans residues 515–535 (GVMVLGFLGLLAMAGSAMGAT). The tract at residues 578-594 (LQTRVTAIEKYLKDQAL) is immunosuppression. Residues N614, N623, and N639 are each glycosylated (N-linked (GlcNAc...) asparagine; by host). Residues 627–648 (QQWEKRVNFLDANITALLEEAQ) adopt a coiled-coil conformation. The segment at 660-681 (KLNSWDVFGNWFDFTSWMAYIR) is MPER; binding to GalCer. Residues 683–703 (GLYVVAGLIVLRIVIYIMQML) traverse the membrane as a helical segment. The Cytoplasmic segment spans residues 704–857 (ARLRKGYRPV…IRQGLELALL (154 aa)). A YXXV motif; contains endocytosis signal motif is present at residues 710-713 (YRPV). C776 carries S-palmitoyl cysteine; by host lipidation. A Di-leucine internalization motif motif is present at residues 856 to 857 (LL).

As to quaternary structure, the mature envelope protein (Env) consists of a homotrimer of non-covalently associated gp120-gp41 heterodimers. The resulting complex protrudes from the virus surface as a spike. There seems to be as few as 10 spikes on the average virion. Interacts with human CD4, CCR5 and CXCR4, to form a P4HB/PDI-CD4-CXCR4-gp120 complex. Gp120 also interacts with the C-type lectins CD209/DC-SIGN and CLEC4M/DC-SIGNR (collectively referred to as DC-SIGN(R)). Gp120 and gp41 interact with GalCer. In terms of assembly, the mature envelope protein (Env) consists of a homotrimer of non-covalently associated gp120-gp41 heterodimers. The resulting complex protrudes from the virus surface as a spike. There seems to be as few as 10 spikes on the average virion. Post-translationally, specific enzymatic cleavages in vivo yield mature proteins. Envelope glycoproteins are synthesized as an inactive precursor that is heavily N-glycosylated and processed likely by host cell furin in the Golgi to yield the mature SU and TM proteins. The cleavage site between SU and TM requires the minimal sequence [KR]-X-[KR]-R. In terms of processing, palmitoylation of the transmembrane protein and of Env polyprotein (prior to its proteolytic cleavage) is essential for their association with host cell membrane lipid rafts. Palmitoylation is therefore required for envelope trafficking to classical lipid rafts, but not for viral replication.

The protein resides in the virion membrane. The protein localises to the host cell membrane. Its subcellular location is the host endosome membrane. The surface protein gp120 (SU) attaches the virus to the host lymphoid cell by binding to the primary receptor CD4. This interaction induces a structural rearrangement creating a high affinity binding site for a chemokine coreceptor like CXCR4 and/or CCR5. This peculiar 2 stage receptor-interaction strategy allows gp120 to maintain the highly conserved coreceptor-binding site in a cryptic conformation, protected from neutralizing antibodies. Since CD4 also displays a binding site for the disulfide-isomerase P4HB/PDI, a P4HB/PDI-CD4-CXCR4-gp120 complex may form. In that complex, P4HB/PDI could reach and reduce gp120 disulfide bonds, causing major conformational changes in gp120. TXN, another PDI family member could also be involved in disulfide rearrangements in Env during fusion. These changes are transmitted to the transmembrane protein gp41 and are thought to activate its fusogenic potential by unmasking its fusion peptide. Functionally, the surface protein gp120 is a ligand for CD209/DC-SIGN and CLEC4M/DC-SIGNR, which are respectively found on dendritic cells (DCs), and on endothelial cells of liver sinusoids and lymph node sinuses. These interactions allow capture of viral particles at mucosal surfaces by these cells and subsequent transmission to permissive cells. DCs are professional antigen presenting cells, critical for host immunity by inducing specific immune responses against a broad variety of pathogens. They act as sentinels in various tissues where they take up antigen, process it, and present it to T-cells following migration to lymphoid organs. HIV subverts the migration properties of dendritic cells to gain access to CD4+ T-cells in lymph nodes. Virus transmission to permissive T-cells occurs either in trans (without DCs infection, through viral capture and transmission), or in cis (following DCs productive infection, through the usual CD4-gp120 interaction), thereby inducing a robust infection. In trans infection, bound virions remain infectious over days and it is proposed that they are not degraded, but protected in non-lysosomal acidic organelles within the DCs close to the cell membrane thus contributing to the viral infectious potential during DCs' migration from the periphery to the lymphoid tissues. On arrival at lymphoid tissues, intact virions recycle back to DCs' cell surface allowing virus transmission to CD4+ T-cells. Virion capture also seems to lead to MHC-II-restricted viral antigen presentation, and probably to the activation of HIV-specific CD4+ cells. In terms of biological role, the transmembrane protein gp41 (TM) acts as a class I viral fusion protein. Under the current model, the protein has at least 3 conformational states: pre-fusion native state, pre-hairpin intermediate state, and post-fusion hairpin state. During fusion of viral and target intracellular membranes, the coiled coil regions (heptad repeats) assume a trimer-of-hairpins structure, positioning the fusion peptide in close proximity to the C-terminal region of the ectodomain. The formation of this structure appears to drive apposition and subsequent fusion of viral and target cell membranes. Complete fusion occurs in host cell endosomes and is dynamin-dependent, however some lipid transfer might occur at the plasma membrane. The virus undergoes clathrin-dependent internalization long before endosomal fusion, thus minimizing the surface exposure of conserved viral epitopes during fusion and reducing the efficacy of inhibitors targeting these epitopes. Membranes fusion leads to delivery of the nucleocapsid into the cytoplasm. Its function is as follows. The envelope glycoprotein gp160 precursor down-modulates cell surface CD4 antigen by interacting with it in the endoplasmic reticulum and blocking its transport to the cell surface. The gp120-gp41 heterodimer seems to contribute to T-cell depletion during HIV-1 infection. The envelope glycoproteins expressed on the surface of infected cells induce apoptosis through an interaction with uninfected cells expressing the receptor (CD4) and the coreceptors CXCR4 or CCR5. This type of bystander killing may be obtained by at least three distinct mechanisms. First, the interaction between the 2 cells can induce cellular fusion followed by nuclear fusion within the syncytium. Syncytia are condemned to die from apoptosis. Second, the 2 interacting cells may not fuse entirely and simply exchange plasma membrane lipids, after a sort of hemifusion process, followed by rapid death. Third, it is possible that virus-infected cells, on the point of undergoing apoptosis, fuse with CD4-expressing cells, in which case apoptosis is rapidly transmitted from one cell to the other and thus occurs in a sort of contagious fashion. Functionally, the gp120-gp41 heterodimer allows rapid transcytosis of the virus through CD4 negative cells such as simple epithelial monolayers of the intestinal, rectal and endocervical epithelial barriers. Both gp120 and gp41 specifically recognize glycosphingolipids galactosyl-ceramide (GalCer) or 3' sulfo-galactosyl-ceramide (GalS) present in the lipid rafts structures of epithelial cells. Binding to these alternative receptors allows the rapid transcytosis of the virus through the epithelial cells. This transcytotic vesicle-mediated transport of virions from the apical side to the basolateral side of the epithelial cells does not involve infection of the cells themselves. The polypeptide is Envelope glycoprotein gp160 (env) (Homo sapiens (Human)).